The sequence spans 330 residues: Aspartate--ammonia ligase (330 aa).

The protein belongs to the class-II aminoacyl-tRNA synthetase family. AsnA subfamily.

It localises to the cytoplasm. It carries out the reaction L-aspartate + NH4(+) + ATP = L-asparagine + AMP + diphosphate + H(+). The protein operates within amino-acid biosynthesis; L-asparagine biosynthesis; L-asparagine from L-aspartate (ammonia route): step 1/1. In Klebsiella pneumoniae subsp. pneumoniae (strain ATCC 700721 / MGH 78578), this protein is Aspartate--ammonia ligase.